Here is a 489-residue protein sequence, read N- to C-terminus: Zinc finger protein 772 (489 aa).

In terms of domain architecture, KRAB spans 27-98 (VNFEDVFVYF…DWVDMTLAVA (72 aa)). C2H2-type zinc fingers lie at residues 144 to 166 (YPCG…QETH), 172 to 194 (YMCV…QKQH), 266 to 288 (YKCS…QRVH), 294 to 316 (YECG…QRIH), 322 to 344 (YECG…QRVH), 350 to 372 (YKCS…ESIH), 378 to 400 (YECS…WSVH), 406 to 428 (YECI…QRVH), 434 to 456 (YVCS…HRIH), and 462 to 484 (YKCS…WKIH).

Belongs to the krueppel C2H2-type zinc-finger protein family.

It localises to the nucleus. In terms of biological role, may be involved in transcriptional regulation. The sequence is that of Zinc finger protein 772 (ZNF772) from Homo sapiens (Human).